Consider the following 284-residue polypeptide: Tryptophan 2,3-dioxygenase (284 aa).

Substrate contacts are provided by residues 51–55 (FIIQH), Tyr113, and Arg117. His240 contacts heme. Thr254 provides a ligand contact to substrate.

This sequence belongs to the tryptophan 2,3-dioxygenase family. As to quaternary structure, homotetramer. The cofactor is heme.

The enzyme catalyses L-tryptophan + O2 = N-formyl-L-kynurenine. It participates in amino-acid degradation; L-tryptophan degradation via kynurenine pathway; L-kynurenine from L-tryptophan: step 1/2. Its function is as follows. Heme-dependent dioxygenase that catalyzes the oxidative cleavage of the L-tryptophan (L-Trp) pyrrole ring and converts L-tryptophan to N-formyl-L-kynurenine. Catalyzes the oxidative cleavage of the indole moiety. The chain is Tryptophan 2,3-dioxygenase from Arthrobacter sp. (strain FB24).